The chain runs to 1193 residues: DNA-directed RNA polymerase subunit beta (1193 aa).

The interval 1173–1193 is disordered; that stretch reads QQAKEAAELEKAKEEALDKTE. Positions 1177–1193 are enriched in basic and acidic residues; the sequence is EAAELEKAKEEALDKTE.

The protein belongs to the RNA polymerase beta chain family. As to quaternary structure, the RNAP catalytic core consists of 2 alpha, 1 beta, 1 beta' and 1 omega subunit. When a sigma factor is associated with the core the holoenzyme is formed, which can initiate transcription.

It catalyses the reaction RNA(n) + a ribonucleoside 5'-triphosphate = RNA(n+1) + diphosphate. DNA-dependent RNA polymerase catalyzes the transcription of DNA into RNA using the four ribonucleoside triphosphates as substrates. This Streptococcus thermophilus (strain CNRZ 1066) protein is DNA-directed RNA polymerase subunit beta.